A 124-amino-acid chain; its full sequence is Holo-[acyl-carrier-protein] synthase (124 aa).

Mg(2+)-binding residues include aspartate 7 and glutamate 55.

It belongs to the P-Pant transferase superfamily. AcpS family. The cofactor is Mg(2+).

The protein localises to the cytoplasm. It carries out the reaction apo-[ACP] + CoA = holo-[ACP] + adenosine 3',5'-bisphosphate + H(+). Transfers the 4'-phosphopantetheine moiety from coenzyme A to a Ser of acyl-carrier-protein. The sequence is that of Holo-[acyl-carrier-protein] synthase from Borrelia garinii subsp. bavariensis (strain ATCC BAA-2496 / DSM 23469 / PBi) (Borreliella bavariensis).